The sequence spans 571 residues: Urease subunit alpha (571 aa).

One can recognise a Urease domain in the interval 133 to 571 (GGVDSHIHFI…LPLAQRYFLF (439 aa)). 3 residues coordinate Ni(2+): histidine 138, histidine 140, and lysine 221. An N6-carboxylysine modification is found at lysine 221. Histidine 223 contacts substrate. 2 residues coordinate Ni(2+): histidine 250 and histidine 276. Catalysis depends on histidine 324, which acts as the Proton donor. Ni(2+) is bound at residue aspartate 364.

The protein belongs to the metallo-dependent hydrolases superfamily. Urease alpha subunit family. Heterotrimer of UreA (gamma), UreB (beta) and UreC (alpha) subunits. Three heterotrimers associate to form the active enzyme. Requires Ni cation as cofactor. Carboxylation allows a single lysine to coordinate two nickel ions.

It localises to the cytoplasm. The catalysed reaction is urea + 2 H2O + H(+) = hydrogencarbonate + 2 NH4(+). It functions in the pathway nitrogen metabolism; urea degradation; CO(2) and NH(3) from urea (urease route): step 1/1. The polypeptide is Urease subunit alpha (Anaeromyxobacter sp. (strain Fw109-5)).